Reading from the N-terminus, the 151-residue chain is UPF0178 protein GSU0171 (151 aa).

The protein belongs to the UPF0178 family.

This Geobacter sulfurreducens (strain ATCC 51573 / DSM 12127 / PCA) protein is UPF0178 protein GSU0171.